We begin with the raw amino-acid sequence, 338 residues long: Probable replication factor C subunit 2 (338 aa).

ATP is bound at residue 60–67; the sequence is GPPGTGKT.

This sequence belongs to the activator 1 small subunits family. In terms of assembly, heteropentamer of various rfc subunits that forms a complex (RFC) with PCNA in the presence of ATP.

It is found in the nucleus. Its function is as follows. The elongation of primed DNA templates by DNA polymerase delta and epsilon requires the action of the accessory proteins PCNA and activator 1. The chain is Probable replication factor C subunit 2 (rfc2) from Dictyostelium discoideum (Social amoeba).